A 462-amino-acid polypeptide reads, in one-letter code: Hydroxymethylglutaryl-CoA synthase (462 aa).

Glu92 functions as the Proton donor/acceptor in the catalytic mechanism. Cys124 serves as the catalytic Acyl-thioester intermediate. Residues Cys124, Thr167, Ser219, His257, Lys266, Asn327, and Ser360 each coordinate (3S)-3-hydroxy-3-methylglutaryl-CoA. The active-site Proton donor/acceptor is the His257. Lys408 is covalently cross-linked (Glycyl lysine isopeptide (Lys-Gly) (interchain with G-Cter in SUMO)).

This sequence belongs to the thiolase-like superfamily. HMG-CoA synthase family. In terms of processing, ubiquitinated.

It carries out the reaction acetoacetyl-CoA + acetyl-CoA + H2O = (3S)-3-hydroxy-3-methylglutaryl-CoA + CoA + H(+). It functions in the pathway metabolic intermediate biosynthesis; (R)-mevalonate biosynthesis; (R)-mevalonate from acetyl-CoA: step 2/3. Functionally, this enzyme condenses acetyl-CoA with acetoacetyl-CoA to form HMG-CoA, which is the substrate for HMG-CoA reductase. The polypeptide is Hydroxymethylglutaryl-CoA synthase (Caenorhabditis elegans).